We begin with the raw amino-acid sequence, 116 residues long: Aspartate 1-decarboxylase (116 aa).

The active-site Schiff-base intermediate with substrate; via pyruvic acid is the S25. Residue S25 is modified to Pyruvic acid (Ser). T57 provides a ligand contact to substrate. Y58 (proton donor) is an active-site residue. 73–75 is a binding site for substrate; sequence GPA.

The protein belongs to the PanD family. As to quaternary structure, heterooctamer of four alpha and four beta subunits. It depends on pyruvate as a cofactor. Post-translationally, is synthesized initially as an inactive proenzyme, which is activated by self-cleavage at a specific serine bond to produce a beta-subunit with a hydroxyl group at its C-terminus and an alpha-subunit with a pyruvoyl group at its N-terminus.

It is found in the cytoplasm. It catalyses the reaction L-aspartate + H(+) = beta-alanine + CO2. It participates in cofactor biosynthesis; (R)-pantothenate biosynthesis; beta-alanine from L-aspartate: step 1/1. Catalyzes the pyruvoyl-dependent decarboxylation of aspartate to produce beta-alanine. The sequence is that of Aspartate 1-decarboxylase from Flavobacterium psychrophilum (strain ATCC 49511 / DSM 21280 / CIP 103535 / JIP02/86).